A 1603-amino-acid polypeptide reads, in one-letter code: Protein TIC 214 (1603 aa).

The next 6 helical transmembrane spans lie at Val-11–Leu-31, Leu-58–Ile-78, Leu-86–Tyr-106, Ile-131–Leu-151, Leu-167–Ile-187, and Phe-213–Phe-233.

Belongs to the TIC214 family. In terms of assembly, part of the Tic complex.

The protein resides in the plastid. It is found in the chloroplast inner membrane. Functionally, involved in protein precursor import into chloroplasts. May be part of an intermediate translocation complex acting as a protein-conducting channel at the inner envelope. The protein is Protein TIC 214 of Physcomitrium patens (Spreading-leaved earth moss).